The chain runs to 394 residues: Elongation factor Tu (394 aa).

The region spanning 10-204 (KPHVNVGTIG…ALDTYIPEPE (195 aa)) is the tr-type G domain. The G1 stretch occupies residues 19–26 (GHVDHGKT). 19-26 (GHVDHGKT) contributes to the GTP binding site. Mg(2+) is bound at residue T26. Positions 60–64 (GITIN) are G2. The interval 81–84 (DCPG) is G3. GTP contacts are provided by residues 81–85 (DCPGH) and 136–139 (NKCD). Residues 136–139 (NKCD) are G4. Positions 174 to 176 (SAL) are G5.

This sequence belongs to the TRAFAC class translation factor GTPase superfamily. Classic translation factor GTPase family. EF-Tu/EF-1A subfamily. Monomer.

It localises to the cytoplasm. The enzyme catalyses GTP + H2O = GDP + phosphate + H(+). Its function is as follows. GTP hydrolase that promotes the GTP-dependent binding of aminoacyl-tRNA to the A-site of ribosomes during protein biosynthesis. This Shewanella pealeana (strain ATCC 700345 / ANG-SQ1) protein is Elongation factor Tu.